Reading from the N-terminus, the 279-residue chain is Energy-coupling factor transporter ATP-binding protein EcfA1 (279 aa).

Positions 6–240 constitute an ABC transporter domain; the sequence is VRLEHVFYKY…ADAMREIGLG (235 aa). An ATP-binding site is contributed by 40-47; sequence GHNGSGKS.

This sequence belongs to the ABC transporter superfamily. Energy-coupling factor EcfA family. As to quaternary structure, forms a stable energy-coupling factor (ECF) transporter complex composed of 2 membrane-embedded substrate-binding proteins (S component), 2 ATP-binding proteins (A component) and 2 transmembrane proteins (T component).

Its subcellular location is the cell membrane. Its function is as follows. ATP-binding (A) component of a common energy-coupling factor (ECF) ABC-transporter complex. Unlike classic ABC transporters this ECF transporter provides the energy necessary to transport a number of different substrates. The polypeptide is Energy-coupling factor transporter ATP-binding protein EcfA1 (Listeria monocytogenes serovar 1/2a (strain ATCC BAA-679 / EGD-e)).